The sequence spans 376 residues: Glutamate 5-kinase (376 aa).

Residue Lys17 participates in ATP binding. Ser57, Asp144, and Asn156 together coordinate substrate. 176-177 (TD) contributes to the ATP binding site. Residues 283-361 (KGQLVLDEGA…SEINQLLGYS (79 aa)) form the PUA domain.

The protein belongs to the glutamate 5-kinase family.

The protein localises to the cytoplasm. It carries out the reaction L-glutamate + ATP = L-glutamyl 5-phosphate + ADP. Its pathway is amino-acid biosynthesis; L-proline biosynthesis; L-glutamate 5-semialdehyde from L-glutamate: step 1/2. Catalyzes the transfer of a phosphate group to glutamate to form L-glutamate 5-phosphate. This is Glutamate 5-kinase from Hydrogenovibrio crunogenus (strain DSM 25203 / XCL-2) (Thiomicrospira crunogena).